We begin with the raw amino-acid sequence, 157 residues long: Transcription elongation factor GreA (157 aa).

Residues Leu-12 to Lys-74 adopt a coiled-coil conformation.

This sequence belongs to the GreA/GreB family.

Necessary for efficient RNA polymerase transcription elongation past template-encoded arresting sites. The arresting sites in DNA have the property of trapping a certain fraction of elongating RNA polymerases that pass through, resulting in locked ternary complexes. Cleavage of the nascent transcript by cleavage factors such as GreA or GreB allows the resumption of elongation from the new 3'terminus. GreA releases sequences of 2 to 3 nucleotides. This Thermoanaerobacter pseudethanolicus (strain ATCC 33223 / 39E) (Clostridium thermohydrosulfuricum) protein is Transcription elongation factor GreA.